A 299-amino-acid polypeptide reads, in one-letter code: ATP phosphoribosyltransferase (299 aa).

It belongs to the ATP phosphoribosyltransferase family. Long subfamily. In terms of assembly, equilibrium between an active dimeric form, an inactive hexameric form and higher aggregates. Interconversion between the various forms is largely reversible and is influenced by the natural substrates and inhibitors of the enzyme. The cofactor is Mg(2+).

It localises to the cytoplasm. It carries out the reaction 1-(5-phospho-beta-D-ribosyl)-ATP + diphosphate = 5-phospho-alpha-D-ribose 1-diphosphate + ATP. It functions in the pathway amino-acid biosynthesis; L-histidine biosynthesis; L-histidine from 5-phospho-alpha-D-ribose 1-diphosphate: step 1/9. Its activity is regulated as follows. Feedback inhibited by histidine. Its function is as follows. Catalyzes the condensation of ATP and 5-phosphoribose 1-diphosphate to form N'-(5'-phosphoribosyl)-ATP (PR-ATP). Has a crucial role in the pathway because the rate of histidine biosynthesis seems to be controlled primarily by regulation of HisG enzymatic activity. This is ATP phosphoribosyltransferase from Yersinia pseudotuberculosis serotype O:1b (strain IP 31758).